Reading from the N-terminus, the 187-residue chain is Peptidyl-tRNA hydrolase (187 aa).

Tyrosine 15 serves as a coordination point for tRNA. Residue histidine 20 is the Proton acceptor of the active site. 3 residues coordinate tRNA: phenylalanine 64, asparagine 66, and asparagine 112.

It belongs to the PTH family. In terms of assembly, monomer.

It localises to the cytoplasm. The enzyme catalyses an N-acyl-L-alpha-aminoacyl-tRNA + H2O = an N-acyl-L-amino acid + a tRNA + H(+). In terms of biological role, hydrolyzes ribosome-free peptidyl-tRNAs (with 1 or more amino acids incorporated), which drop off the ribosome during protein synthesis, or as a result of ribosome stalling. Functionally, catalyzes the release of premature peptidyl moieties from peptidyl-tRNA molecules trapped in stalled 50S ribosomal subunits, and thus maintains levels of free tRNAs and 50S ribosomes. The polypeptide is Peptidyl-tRNA hydrolase (Parabacteroides distasonis (strain ATCC 8503 / DSM 20701 / CIP 104284 / JCM 5825 / NCTC 11152)).